A 600-amino-acid chain; its full sequence is Lamin-B2 (600 aa).

The head stretch occupies residues 2–27 (SGTPIRGTPGGTPLSPTRISRLQEKE). Serine 16 is subject to Phosphoserine; by CDK1. The IF rod domain occupies 25–381 (EKEELRQLND…KLLEGEEERL (357 aa)). The coil 1A stretch occupies residues 28 to 64 (ELRQLNDRLAVYIDRVRALELENDRLLVKISEKEEVT). The coil 1B stretch occupies residues 75–212 (YESELADARR…NVFEEEIRET (138 aa)). A coil 2 region spans residues 237–379 (QALEDLRNQH…YRKLLEGEEE (143 aa)). 2 disordered regions span residues 377–449 (EEER…QMSQ) and 568–600 (ENEE…CLVM). A tail region spans residues 380 to 600 (RLKLSPSPSS…RTTSRGCLVM (221 aa)). Low complexity predominate over residues 383-410 (LSPSPSSRVTVSRATSSSSSSSTSLVRS). Serine 386 carries the post-translational modification Phosphoserine. A Nuclear localization signal motif is present at residues 414 to 419 (KRRRIE). Residues 445–562 (FQMSQQASAT…EEVAVRTVTK (118 aa)) enclose the LTD domain. The span at 569-583 (NEEEEDEADFGEEDL) shows a compositional bias: acidic residues. The span at 584–600 (FNQQGDPRTTSRGCLVM) shows a compositional bias: polar residues. The residue at position 597 (cysteine 597) is a Cysteine methyl ester. The S-farnesyl cysteine moiety is linked to residue cysteine 597. Positions 598–600 (LVM) are cleaved as a propeptide — removed in mature form.

It belongs to the intermediate filament family. Homodimer. Lamin dimers then assemble into dimeric head-to-tail polymers. Ultimately, two head-to-tail polymers assemble laterally into a protofilament with a uniformly shaped rod of 3.5 nm in diameter. Phosphorylation plays a key role in lamin organization, subcellular localization and nuclear envelope disintegration. Phosphorylation by CDK1 at Ser-16 at the onset of mitosis drives lamin disassembly and nuclear envelope breakdown.

The protein localises to the nucleus lamina. Its subcellular location is the nucleus envelope. It is found in the nucleus. It localises to the nucleoplasm. The protein resides in the nucleus matrix. Functionally, lamins are intermediate filament proteins that assemble into a filamentous meshwork, and which constitute the major components of the nuclear lamina, a fibrous layer on the nucleoplasmic side of the inner nuclear membrane. Lamins provide a framework for the nuclear envelope, bridging the nuclear envelope and chromatin. Plays an important role in nuclear assembly, chromatin organization, nuclear membrane and telomere dynamics. In Gallus gallus (Chicken), this protein is Lamin-B2 (LMNB2).